Consider the following 1226-residue polypeptide: Polyamine-transporting ATPase 13A3 (1226 aa).

Residues 1 to 28 lie on the Cytoplasmic side of the membrane; the sequence is MDKEERKIINQGQEDEMEIYGYNLSRWK. An intramembrane segment occupies 29-49; it reads LAIVSLGVICTGGFLLLLLYW. Over 50–205 the chain is Cytoplasmic; it reads MPEWRVKATC…IAVKVPSVFK (156 aa). Serine 98 is subject to Phosphoserine. Residues 206-226 traverse the membrane as a helical segment; sequence LLIKEVLNPFYIFQLFSVILW. Residues 227-232 are Lumenal-facing; sequence STDEYY. The chain crosses the membrane as a helical span at residues 233–253; sequence YYALAIVVMSIVSIVSSLYSI. The Cytoplasmic portion of the chain corresponds to 254-409; that stretch reads RKQYVMLHDM…KPTDFKLYRD (156 aa). A helical transmembrane segment spans residues 410–430; that stretch reads AYLFLLCLVAVAGIGFIYTII. Over 431-448 the chain is Lumenal; it reads NSILNEVQVGVIIIESLD. Residues 449–469 traverse the membrane as a helical segment; sequence IITITVPPALPAAMTAGIVYA. Over 470–940 the chain is Cytoplasmic; sequence QRRLKKIGIF…ALITSFCVFK (471 aa). Catalysis depends on aspartate 498, which acts as the 4-aspartylphosphate intermediate. Mg(2+)-binding residues include aspartate 498 and threonine 500. ATP-binding positions include 498-500, phenylalanine 628, arginine 684, and aspartate 750; that span reads DKT. Residue serine 817 is modified to Phosphoserine. A Mg(2+)-binding site is contributed by aspartate 883. 883-887 lines the ATP pocket; it reads DGAND. Residues 941-961 traverse the membrane as a helical segment; the sequence is FMALYSIIQYFSVTLLYSILS. Position 962 (asparagine 962) is a topological domain, lumenal. Residues 963-983 form a helical membrane-spanning segment; it reads LGDFQFLFIDLAIILVVVFTM. Residues 984–999 lie on the Cytoplasmic side of the membrane; the sequence is SLNPAWKELVAQRPPS. Residues 1000–1020 form a helical membrane-spanning segment; that stretch reads GLISGALLFSVLSQIIICIGF. At 1021-1073 the chain is on the lumenal side; that stretch reads QSLGFFWVKQQPWYEVWHPKSDACNATGSLLWNSSHLDNETELDEHNIQNYEN. The chain crosses the membrane as a helical span at residues 1074 to 1094; sequence TTVFFISSFQYLIVAIAFSKG. The Cytoplasmic segment spans residues 1095–1105; that stretch reads KPFRQPCYKNY. A helical transmembrane segment spans residues 1106–1126; that stretch reads FFVFSVIFLYVFILFIMLYPV. At 1127 to 1143 the chain is on the lumenal side; it reads ASVDQVLQIVCVPYQWR. The helical transmembrane segment at 1144-1164 threads the bilayer; the sequence is VTMLIIVLVNAFVSITVEESV. At 1165 to 1226 the chain is on the cytoplasmic side; the sequence is DRWRKCCLPW…NGSCQIITIT (62 aa).

It belongs to the cation transport ATPase (P-type) (TC 3.A.3) family. Type V subfamily.

The protein resides in the recycling endosome membrane. It localises to the early endosome membrane. It is found in the late endosome membrane. It carries out the reaction putrescine(out) + ATP + H2O = putrescine(in) + ADP + phosphate + H(+). Its function is as follows. ATP-driven pump involved in endocytosis-dependent polyamine transport. Uses ATP as an energy source to transfer polyamine precursor putrescine from the endosomal compartment to the cytosol. This Macaca fascicularis (Crab-eating macaque) protein is Polyamine-transporting ATPase 13A3 (ATP13A3).